The sequence spans 429 residues: Adenylosuccinate synthetase (429 aa).

Residues 12–18 (GDEGKGK) and 40–42 (GHT) each bind GTP. D13 functions as the Proton acceptor in the catalytic mechanism. Mg(2+) is bound by residues D13 and G40. IMP is bound by residues 13–16 (DEGK), 38–41 (NAGH), T130, R144, Q225, T240, and R304. The active-site Proton donor is H41. 300-306 (ATTGRPR) is a substrate binding site. GTP-binding positions include R306, 332-334 (KLD), and 414-416 (SVG).

This sequence belongs to the adenylosuccinate synthetase family. In terms of assembly, homodimer. The cofactor is Mg(2+).

It localises to the cytoplasm. The catalysed reaction is IMP + L-aspartate + GTP = N(6)-(1,2-dicarboxyethyl)-AMP + GDP + phosphate + 2 H(+). It participates in purine metabolism; AMP biosynthesis via de novo pathway; AMP from IMP: step 1/2. Functionally, plays an important role in the de novo pathway of purine nucleotide biosynthesis. Catalyzes the first committed step in the biosynthesis of AMP from IMP. The sequence is that of Adenylosuccinate synthetase from Syntrophobacter fumaroxidans (strain DSM 10017 / MPOB).